Consider the following 148-residue polypeptide: NTR domain-containing protein (148 aa).

Residues methionine 1–alanine 26 form the signal peptide. 3 cysteine pairs are disulfide-bonded: cysteine 27–cysteine 96, cysteine 29–cysteine 122, and cysteine 40–cysteine 146. Residues cysteine 27–cysteine 146 enclose the NTR domain.

As to expression, prismatic layer of shell (at protein level). Expressed primarily in the mantle with highest level in the mantle edge and lower level in the mantle pallium.

It localises to the secreted. The polypeptide is NTR domain-containing protein (Margaritifera margaritifera (Freshwater pearl mussel)).